Consider the following 392-residue polypeptide: Multidrug resistance protein MdtL (392 aa).

12 helical membrane passes run 4-24 (FLLCSFALVLLYPSGIDMYLV), 38-58 (AQLHIAFSVYLAGMASAMLFA), 69-89 (PVAIVGAAIFVIASLICAQVH), 95-115 (LIGRFIQGIAAGSCYVVAFAI), 131-151 (LLNGITCIIPVLAPVLGHLIM), 158-178 (SLFYTMTGMGVMVAVLSVFIL), 209-229 (LLITTLSVTVILTYVNVSPVL), 246-266 (ALMAMISMAVSFSTPFVLSLF), 270-290 (TLMLTSQVLFLAAGVTLSLAT), 294-314 (VTLIGLGMICAGFSVGFGVAM), 331-351 (VLGIAQVCGSSLWIWLAAIIG), and 357-377 (MLIGILIACSIVSLVLLLVVT).

Belongs to the major facilitator superfamily. DHA1 family. MdtL (TC 2.A.1.2.22) subfamily.

Its subcellular location is the cell inner membrane. The sequence is that of Multidrug resistance protein MdtL from Klebsiella pneumoniae subsp. pneumoniae (strain ATCC 700721 / MGH 78578).